Reading from the N-terminus, the 129-residue chain is Histone H2A.J (129 aa).

A disordered region spans residues 1-22 (MSGRGKQGGKVRAKAKSRSSRA). 2 positions are modified to N6-acetyllysine: lysine 6 and lysine 10. Positions 7-19 (QGGKVRAKAKSRS) are enriched in basic residues. The residue at position 10 (lysine 10) is an N6-lactoyllysine; alternate. At glutamine 105 the chain carries N5-methylglutamine. Residue threonine 121 is modified to Phosphothreonine; by DCAF1.

The protein belongs to the histone H2A family. As to quaternary structure, the nucleosome is a histone octamer containing two molecules each of H2A, H2B, H3 and H4 assembled in one H3-H4 heterotetramer and two H2A-H2B heterodimers. The octamer wraps approximately 147 bp of DNA. Monoubiquitination of Lys-120 (H2AXK119ub) gives a specific tag for epigenetic transcriptional repression. Following DNA double-strand breaks (DSBs), it is ubiquitinated through 'Lys-63' linkage of ubiquitin moieties. Post-translationally, glutamine methylation at Gln-105 (H2AQ104me) by FBL is specifically dedicated to polymerase I. It is present at 35S ribosomal DNA locus and impairs binding of the FACT complex. In terms of processing, phosphorylation on Ser-2 (H2AS1ph) is enhanced during mitosis. Phosphorylation on Ser-2 by RPS6KA5/MSK1 directly represses transcription. Acetylation of H3 inhibits Ser-2 phosphorylation by RPS6KA5/MSK1. Phosphorylation at Thr-121 (H2AT120ph) by DCAF1 is present in the regulatory region of many tumor suppresor genes and down-regulates their transcription.

It localises to the nucleus. Its subcellular location is the chromosome. In terms of biological role, core component of nucleosome. Nucleosomes wrap and compact DNA into chromatin, limiting DNA accessibility to the cellular machineries which require DNA as a template. Histones thereby play a central role in transcription regulation, DNA repair, DNA replication and chromosomal stability. DNA accessibility is regulated via a complex set of post-translational modifications of histones, also called histone code, and nucleosome remodeling. The sequence is that of Histone H2A.J from Macaca fascicularis (Crab-eating macaque).